Here is a 165-residue protein sequence, read N- to C-terminus: Nucleotide-binding protein PMN2A_1813 (165 aa).

This sequence belongs to the YajQ family.

Functionally, nucleotide-binding protein. In Prochlorococcus marinus (strain NATL2A), this protein is Nucleotide-binding protein PMN2A_1813.